A 332-amino-acid polypeptide reads, in one-letter code: Homoserine kinase (332 aa).

It belongs to the pseudomonas-type ThrB family.

The enzyme catalyses L-homoserine + ATP = O-phospho-L-homoserine + ADP + H(+). Its pathway is amino-acid biosynthesis; L-threonine biosynthesis; L-threonine from L-aspartate: step 4/5. In Burkholderia multivorans (strain ATCC 17616 / 249), this protein is Homoserine kinase.